The chain runs to 455 residues: Bifunctional protein GlmU (455 aa).

The segment at 1–226 (MSLEIVILAA…AMEVQGANDR (226 aa)) is pyrophosphorylase. UDP-N-acetyl-alpha-D-glucosamine-binding positions include 8-11 (LAAG), lysine 22, glutamine 73, 78-79 (GT), 99-101 (YGD), glycine 136, glutamate 151, asparagine 166, and asparagine 224. A Mg(2+)-binding site is contributed by aspartate 101. Asparagine 224 is a binding site for Mg(2+). Residues 227–247 (KQLAELERHYQLRAGRRLMAQ) form a linker region. Residues 248–455 (GVTLRDPARF…WKRPEKIKKD (208 aa)) form an N-acetyltransferase region. UDP-N-acetyl-alpha-D-glucosamine contacts are provided by arginine 330 and lysine 348. The active-site Proton acceptor is histidine 360. The UDP-N-acetyl-alpha-D-glucosamine site is built by tyrosine 363 and asparagine 374. Residues alanine 377, 383–384 (NY), serine 402, alanine 420, and arginine 437 contribute to the acetyl-CoA site.

In the N-terminal section; belongs to the N-acetylglucosamine-1-phosphate uridyltransferase family. It in the C-terminal section; belongs to the transferase hexapeptide repeat family. Homotrimer. Mg(2+) is required as a cofactor.

It localises to the cytoplasm. The catalysed reaction is alpha-D-glucosamine 1-phosphate + acetyl-CoA = N-acetyl-alpha-D-glucosamine 1-phosphate + CoA + H(+). The enzyme catalyses N-acetyl-alpha-D-glucosamine 1-phosphate + UTP + H(+) = UDP-N-acetyl-alpha-D-glucosamine + diphosphate. It functions in the pathway nucleotide-sugar biosynthesis; UDP-N-acetyl-alpha-D-glucosamine biosynthesis; N-acetyl-alpha-D-glucosamine 1-phosphate from alpha-D-glucosamine 6-phosphate (route II): step 2/2. Its pathway is nucleotide-sugar biosynthesis; UDP-N-acetyl-alpha-D-glucosamine biosynthesis; UDP-N-acetyl-alpha-D-glucosamine from N-acetyl-alpha-D-glucosamine 1-phosphate: step 1/1. The protein operates within bacterial outer membrane biogenesis; LPS lipid A biosynthesis. Functionally, catalyzes the last two sequential reactions in the de novo biosynthetic pathway for UDP-N-acetylglucosamine (UDP-GlcNAc). The C-terminal domain catalyzes the transfer of acetyl group from acetyl coenzyme A to glucosamine-1-phosphate (GlcN-1-P) to produce N-acetylglucosamine-1-phosphate (GlcNAc-1-P), which is converted into UDP-GlcNAc by the transfer of uridine 5-monophosphate (from uridine 5-triphosphate), a reaction catalyzed by the N-terminal domain. The protein is Bifunctional protein GlmU of Pseudomonas fluorescens (strain ATCC BAA-477 / NRRL B-23932 / Pf-5).